Here is a 248-residue protein sequence, read N- to C-terminus: 5'-nucleotidase SurE (248 aa).

Asp-8, Asp-9, Ser-39, and Asn-91 together coordinate a divalent metal cation.

This sequence belongs to the SurE nucleotidase family. Requires a divalent metal cation as cofactor.

The protein resides in the cytoplasm. It catalyses the reaction a ribonucleoside 5'-phosphate + H2O = a ribonucleoside + phosphate. Its function is as follows. Nucleotidase that shows phosphatase activity on nucleoside 5'-monophosphates. The sequence is that of 5'-nucleotidase SurE from Neisseria gonorrhoeae (strain ATCC 700825 / FA 1090).